The primary structure comprises 967 residues: Isoleucine--tRNA ligase (967 aa).

The 'HIGH' region motif lies at 68 to 78 (PYANGTLHMGH). Glutamate 583 is a binding site for L-isoleucyl-5'-AMP. A 'KMSKS' region motif is present at residues 624–628 (KMSKS). Lysine 627 provides a ligand contact to ATP. Zn(2+) contacts are provided by cysteine 937, cysteine 940, cysteine 957, and cysteine 960.

This sequence belongs to the class-I aminoacyl-tRNA synthetase family. IleS type 1 subfamily. As to quaternary structure, monomer. Zn(2+) is required as a cofactor.

Its subcellular location is the cytoplasm. It carries out the reaction tRNA(Ile) + L-isoleucine + ATP = L-isoleucyl-tRNA(Ile) + AMP + diphosphate. Its function is as follows. Catalyzes the attachment of isoleucine to tRNA(Ile). As IleRS can inadvertently accommodate and process structurally similar amino acids such as valine, to avoid such errors it has two additional distinct tRNA(Ile)-dependent editing activities. One activity is designated as 'pretransfer' editing and involves the hydrolysis of activated Val-AMP. The other activity is designated 'posttransfer' editing and involves deacylation of mischarged Val-tRNA(Ile). The polypeptide is Isoleucine--tRNA ligase (Prochlorococcus marinus (strain NATL2A)).